The chain runs to 262 residues: Sulfur carrier protein FdhD (262 aa).

Catalysis depends on Cys107, which acts as the Cysteine persulfide intermediate.

Belongs to the FdhD family.

It localises to the cytoplasm. Its function is as follows. Required for formate dehydrogenase (FDH) activity. Acts as a sulfur carrier protein that transfers sulfur from IscS to the molybdenum cofactor prior to its insertion into FDH. The protein is Sulfur carrier protein FdhD of Bacillus pumilus (strain SAFR-032).